Here is an 88-residue protein sequence, read N- to C-terminus: uncharacterized protein (88 aa).

This is an uncharacterized protein from Sinorhizobium fredii (strain NBRC 101917 / NGR234).